We begin with the raw amino-acid sequence, 124 residues long: Putative ankyrin repeat protein RF_1087 (124 aa).

ANK repeat units lie at residues 17–46 (NDQKLLHLAIRAGYKNIVEYLLKKGANPNI), 50–79 (NGETTLHFAAMNGCVRTIECLIKSGAIIDS), and 83–112 (FERTPLELAINSGNTDAVKLFLQYEATIGN).

This Rickettsia felis (strain ATCC VR-1525 / URRWXCal2) (Rickettsia azadi) protein is Putative ankyrin repeat protein RF_1087.